Here is a 730-residue protein sequence, read N- to C-terminus: Polyribonucleotide nucleotidyltransferase (730 aa).

Positions 489 and 495 each coordinate Mg(2+). The KH domain occupies 556–615 (PKIDTIKVDVDKIKIVIGKGGETIDKIIEETGVKIDIDEDGNIAIYSSDQEAINRTKEII). In terms of domain architecture, S1 motif spans 625-693 (GEIYEAEVVR…DKGRIDASMK (69 aa)). The segment at 691-730 (SMKALLPRPPRSEKSNKEDHQSVRHHGSPKDDKGKEKYDK) is disordered. Positions 700 to 730 (PRSEKSNKEDHQSVRHHGSPKDDKGKEKYDK) are enriched in basic and acidic residues.

This sequence belongs to the polyribonucleotide nucleotidyltransferase family. The cofactor is Mg(2+).

The protein resides in the cytoplasm. The enzyme catalyses RNA(n+1) + phosphate = RNA(n) + a ribonucleoside 5'-diphosphate. Its function is as follows. Involved in mRNA degradation. Catalyzes the phosphorolysis of single-stranded polyribonucleotides processively in the 3'- to 5'-direction. The polypeptide is Polyribonucleotide nucleotidyltransferase (Streptococcus mutans serotype c (strain ATCC 700610 / UA159)).